Consider the following 414-residue polypeptide: MQLLIPESRIVFASFFIFGLLNNILYVVILSAAIDLVGSATPKATVLLADIIPSFTIKVMAPFFVGLISYRTRIWMLVGLSSFGMLVISLTSDESINAKIVGICMASLSSGLGEVTFLQLTHFYQREYSISGFSSGTGGAGLLGSFVFMLLTNMLGMKVWVVLLLFAVLPLGFLMAFYVMLPKARGGGGDEPGYEALDSLDERSDPSSNASFSSSQTVSLKGHVVSTIKNILPLIRPYMLPLCLVYVSEYIINQGISPTLLFPLDELPHWLFSSYRDIYVVYGFMYQLGVFVSRSSISFGIRIKRLYLLSVLQFANVVITVYQSVHDKPFSSVWLLLALIFYEGLLGGFSYVNTFMSVSEEVSKSKREFSMGCVGISDTFGILLAGCINWSLEPHLCSLQVNRGRDWCLNGGSA.

A signal peptide spans 1–33 (MQLLIPESRIVFASFFIFGLLNNILYVVILSAA). Transmembrane regions (helical) follow at residues 48-68 (LADI…VGLI), 74-94 (IWML…TSDE), 100-120 (IVGI…FLQL), 137-157 (TGGA…MLGM), and 159-179 (VWVV…AFYV). A disordered region spans residues 195-214 (EALDSLDERSDPSSNASFSS). Helical transmembrane passes span 242–262 (LCLV…TLLF), 281–301 (VYGF…SFGI), 306–326 (LYLL…QSVH), 332–352 (SVWL…FSYV), and 368–388 (EFSM…AGCI).

This sequence belongs to the battenin family.

The protein localises to the vacuole membrane. Functionally, involved in vacuolar transport and vacuole pH homeostasis. Also required for cytokinesis. The chain is Protein BTN1 (BTN1) from Debaryomyces hansenii (strain ATCC 36239 / CBS 767 / BCRC 21394 / JCM 1990 / NBRC 0083 / IGC 2968) (Yeast).